A 506-amino-acid polypeptide reads, in one-letter code: Cationic amino acid transporter 8 (506 aa).

Residues asparagine 2 and asparagine 5 are each glycosylated (N-linked (GlcNAc...) asparagine). Residues 38–58 form a helical membrane-spanning segment; the sequence is FYLLLIIIIYTATSACIYFDW. An N-linked (GlcNAc...) asparagine glycan is attached at asparagine 75. A run of 5 helical transmembrane segments spans residues 93-113, 116-136, 147-167, 174-194, and 211-231; these read NLYP…GFLY, IGPK…WIFL, LIGF…ILTV, ISTF…AVPA, and ICYG…TFLL. N-linked (GlcNAc...) asparagine glycosylation is present at asparagine 277. Residues 302 to 322 traverse the membrane as a helical segment; sequence ILLFFKVLLSYPSICIIVYFI. N-linked (GlcNAc...) asparagine glycans are attached at residues asparagine 325 and asparagine 342. 4 helical membrane-spanning segments follow: residues 344 to 364, 372 to 392, 399 to 419, and 427 to 447; these read SIIN…IIFG, AAII…TALI, LISA…IYCF, and VVFG…SLFC. N-linked (GlcNAc...) asparagine glycans are attached at residues asparagine 453 and asparagine 456. A helical membrane pass occupies residues 466-486; the sequence is TISILLAISFIIMFLPLSILY.

It belongs to the SLC43A transporter (TC 2.A.1.44) family.

It localises to the cell membrane. In terms of biological role, cationic amino acid transporter which transports L-arginine, L-lysine and, to a lesser extent, L-histidine and ornithine. Plays an essential role in gametogenesis. This is Cationic amino acid transporter 8 from Plasmodium berghei (strain Anka).